The primary structure comprises 266 residues: UPF0354 protein lin1649 (266 aa).

This sequence belongs to the UPF0354 family.

This is UPF0354 protein lin1649 from Listeria innocua serovar 6a (strain ATCC BAA-680 / CLIP 11262).